The sequence spans 209 residues: dTTP/UTP pyrophosphatase (209 aa).

The Proton acceptor role is filled by Asp-79.

The protein belongs to the Maf family. YhdE subfamily. It depends on a divalent metal cation as a cofactor.

The protein localises to the cytoplasm. The catalysed reaction is dTTP + H2O = dTMP + diphosphate + H(+). It catalyses the reaction UTP + H2O = UMP + diphosphate + H(+). Its function is as follows. Nucleoside triphosphate pyrophosphatase that hydrolyzes dTTP and UTP. May have a dual role in cell division arrest and in preventing the incorporation of modified nucleotides into cellular nucleic acids. The protein is dTTP/UTP pyrophosphatase of Bradyrhizobium diazoefficiens (strain JCM 10833 / BCRC 13528 / IAM 13628 / NBRC 14792 / USDA 110).